An 87-amino-acid chain; its full sequence is Large ribosomal subunit protein bL27 (87 aa).

Residues methionine 1 to leucine 21 are disordered.

This sequence belongs to the bacterial ribosomal protein bL27 family.

The protein is Large ribosomal subunit protein bL27 of Burkholderia multivorans (strain ATCC 17616 / 249).